The primary structure comprises 308 residues: Ribonuclease HIII (308 aa).

The RNase H type-2 domain maps to 91-308 (KNVIGSDEVG…TEKALKMVKK (218 aa)). A divalent metal cation-binding residues include Asp-97, Glu-98, and Asp-202.

The protein belongs to the RNase HII family. RnhC subfamily. Mn(2+) serves as cofactor. It depends on Mg(2+) as a cofactor.

Its subcellular location is the cytoplasm. The catalysed reaction is Endonucleolytic cleavage to 5'-phosphomonoester.. Endonuclease that specifically degrades the RNA of RNA-DNA hybrids. The chain is Ribonuclease HIII from Listeria monocytogenes serotype 4b (strain F2365).